A 202-amino-acid polypeptide reads, in one-letter code: Small ribosomal subunit protein uS4 (202 aa).

Residues 91–168 (SRLSSILYNS…HKVPDYLEVD (78 aa)) form the S4 RNA-binding domain.

This sequence belongs to the universal ribosomal protein uS4 family. As to quaternary structure, part of the 30S ribosomal subunit. Contacts protein S5. The interaction surface between S4 and S5 is involved in control of translational fidelity.

In terms of biological role, one of the primary rRNA binding proteins, it binds directly to 16S rRNA where it nucleates assembly of the body of the 30S subunit. With S5 and S12 plays an important role in translational accuracy. The sequence is that of Small ribosomal subunit protein uS4 from Ehrlichia canis (strain Jake).